Consider the following 318-residue polypeptide: Pyrimidine-specific ribonucleoside hydrolase RihA (318 aa).

His-240 is an active-site residue.

This sequence belongs to the IUNH family. RihA subfamily.

In terms of biological role, hydrolyzes cytidine or uridine to ribose and cytosine or uracil, respectively. This chain is Pyrimidine-specific ribonucleoside hydrolase RihA, found in Shewanella sp. (strain MR-4).